The sequence spans 232 residues: Putative caffeoyl-CoA O-methyltransferase At1g67980 (232 aa).

Lysine 8 contacts substrate. S-adenosyl-L-methionine is bound by residues valine 52, glutamate 74, 76-77, serine 82, and aspartate 100; that span reads GV. Aspartate 149 lines the substrate pocket. Aspartate 149 is an a divalent metal cation binding site. Aspartate 151 provides a ligand contact to S-adenosyl-L-methionine. Residues aspartate 175 and asparagine 176 each coordinate a divalent metal cation.

Belongs to the class I-like SAM-binding methyltransferase superfamily. Cation-dependent O-methyltransferase family. CCoAMT subfamily. Requires a divalent metal cation as cofactor.

It carries out the reaction (E)-caffeoyl-CoA + S-adenosyl-L-methionine = (E)-feruloyl-CoA + S-adenosyl-L-homocysteine + H(+). It participates in aromatic compound metabolism; phenylpropanoid biosynthesis. Functionally, methylates caffeoyl-CoA to feruloyl-CoA and 5-hydroxyferuloyl-CoA to sinapoyl-CoA. Plays a role in the synthesis of feruloylated polysaccharides. Involved in the reinforcement of the plant cell wall. Also involved in the responding to wounding or pathogen challenge by the increased formation of cell wall-bound ferulic acid polymers. This chain is Putative caffeoyl-CoA O-methyltransferase At1g67980, found in Arabidopsis thaliana (Mouse-ear cress).